The chain runs to 220 residues: Adapter protein MecA (220 aa).

It belongs to the MecA family. Homodimer.

In terms of biological role, enables the recognition and targeting of unfolded and aggregated proteins to the ClpC protease or to other proteins involved in proteolysis. This chain is Adapter protein MecA, found in Macrococcus caseolyticus (strain JCSC5402) (Macrococcoides caseolyticum).